We begin with the raw amino-acid sequence, 222 residues long: Nucleoside triphosphate pyrophosphatase (222 aa).

Asp-82 functions as the Proton acceptor in the catalytic mechanism.

It belongs to the Maf family. It depends on a divalent metal cation as a cofactor.

Its subcellular location is the cytoplasm. The catalysed reaction is a ribonucleoside 5'-triphosphate + H2O = a ribonucleoside 5'-phosphate + diphosphate + H(+). It carries out the reaction a 2'-deoxyribonucleoside 5'-triphosphate + H2O = a 2'-deoxyribonucleoside 5'-phosphate + diphosphate + H(+). Nucleoside triphosphate pyrophosphatase. May have a dual role in cell division arrest and in preventing the incorporation of modified nucleotides into cellular nucleic acids. This is Nucleoside triphosphate pyrophosphatase from Mycobacterium tuberculosis (strain ATCC 25177 / H37Ra).